Consider the following 499-residue polypeptide: Glutamate--tRNA ligase (499 aa).

The 'HIGH' region signature appears at 12-22 (PSPTGHLHIGN). A 'KMSKS' region motif is present at residues 259 to 263 (KLSKR). K262 is an ATP binding site.

Belongs to the class-I aminoacyl-tRNA synthetase family. Glutamate--tRNA ligase type 1 subfamily. As to quaternary structure, monomer.

It is found in the cytoplasm. It carries out the reaction tRNA(Glu) + L-glutamate + ATP = L-glutamyl-tRNA(Glu) + AMP + diphosphate. Functionally, catalyzes the attachment of glutamate to tRNA(Glu) in a two-step reaction: glutamate is first activated by ATP to form Glu-AMP and then transferred to the acceptor end of tRNA(Glu). The chain is Glutamate--tRNA ligase from Lactobacillus gasseri (strain ATCC 33323 / DSM 20243 / BCRC 14619 / CIP 102991 / JCM 1131 / KCTC 3163 / NCIMB 11718 / NCTC 13722 / AM63).